We begin with the raw amino-acid sequence, 472 residues long: Lactate utilization protein B (472 aa).

4Fe-4S ferredoxin-type domains follow at residues 304–334 (GTEF…GHSY) and 353–382 (YDDY…LHEL). Positions 313, 316, 319, 323, 366, 369, and 373 each coordinate [4Fe-4S] cluster.

Belongs to the LutB/YkgF family.

Its function is as follows. Is involved in L-lactate degradation and allows cells to grow with lactate as the sole carbon source. Has probably a role as an electron transporter during oxidation of L-lactate. The chain is Lactate utilization protein B from Anoxybacillus flavithermus (strain DSM 21510 / WK1).